The sequence spans 475 residues: MIQYSSKFNNAKVLVLGDVMLDRYWFGATNRISPEAPVPVVKVQGIEERAGGAANVAMNIASLSVPVALHGLIGQDDAGRALDKLLNSHNIQNHCVALDSHPTITKLRILSRHQQLLRLDFEEGFHHVASDSLLAKLEQEITAYGALILSDYGKGTLESVQQMIQVARKAGVPTLIDPKGTDFERYRGATLLTPNMSEFEAVVGHCKDDDEIVEKGLKLIADFELTALLVTRSEKGMTLLRPNQAPFHLPTQAKEVYDVTGAGDTVISVLATAIADGRPYEEACYLANAAAGVVVGKLGTSTVTPTELENAIHHREETGFGILAEDELKRAVEQAKQRGEKIVMTNGCFDILHPGHVSYLENARKLGDRLIVAVNTDESVKRLKGESRPINDLNARMAVLAGLASVDWVVPFAEDTPQRLIGEILPNLLVKGGDYKPEEIAGSQEVWANGGEVKVLNFENGCSTTNVIKKIQASK.

The segment at 1–318 (MIQYSSKFNN…ENAIHHREET (318 aa)) is ribokinase. 195–198 (NMSE) contributes to the ATP binding site. Residue aspartate 264 is part of the active site. The cytidylyltransferase stretch occupies residues 344–475 (MTNGCFDILH…NVIKKIQASK (132 aa)).

The protein in the N-terminal section; belongs to the carbohydrate kinase PfkB family. It in the C-terminal section; belongs to the cytidylyltransferase family. Homodimer.

It carries out the reaction D-glycero-beta-D-manno-heptose 7-phosphate + ATP = D-glycero-beta-D-manno-heptose 1,7-bisphosphate + ADP + H(+). It catalyses the reaction D-glycero-beta-D-manno-heptose 1-phosphate + ATP + H(+) = ADP-D-glycero-beta-D-manno-heptose + diphosphate. It functions in the pathway nucleotide-sugar biosynthesis; ADP-L-glycero-beta-D-manno-heptose biosynthesis; ADP-L-glycero-beta-D-manno-heptose from D-glycero-beta-D-manno-heptose 7-phosphate: step 1/4. Its pathway is nucleotide-sugar biosynthesis; ADP-L-glycero-beta-D-manno-heptose biosynthesis; ADP-L-glycero-beta-D-manno-heptose from D-glycero-beta-D-manno-heptose 7-phosphate: step 3/4. It participates in bacterial outer membrane biogenesis; LPS core biosynthesis. Catalyzes the phosphorylation of D-glycero-D-manno-heptose 7-phosphate at the C-1 position to selectively form D-glycero-beta-D-manno-heptose-1,7-bisphosphate. In terms of biological role, catalyzes the ADP transfer from ATP to D-glycero-beta-D-manno-heptose 1-phosphate, yielding ADP-D-glycero-beta-D-manno-heptose. The chain is Bifunctional protein HldE (hldE) from Actinobacillus pleuropneumoniae (Haemophilus pleuropneumoniae).